The sequence spans 165 residues: Shikimate kinase (165 aa).

Gly12–Thr17 serves as a coordination point for ATP. Position 16 (Ser16) interacts with Mg(2+). 3 residues coordinate substrate: Asp34, Arg57, and Gly79. Arg116 is a binding site for ATP. Arg133 is a substrate binding site.

This sequence belongs to the shikimate kinase family. Monomer. It depends on Mg(2+) as a cofactor.

The protein localises to the cytoplasm. The enzyme catalyses shikimate + ATP = 3-phosphoshikimate + ADP + H(+). It participates in metabolic intermediate biosynthesis; chorismate biosynthesis; chorismate from D-erythrose 4-phosphate and phosphoenolpyruvate: step 5/7. In terms of biological role, catalyzes the specific phosphorylation of the 3-hydroxyl group of shikimic acid using ATP as a cosubstrate. In Clostridium botulinum (strain Alaska E43 / Type E3), this protein is Shikimate kinase.